The primary structure comprises 459 residues: GTPase Der (459 aa).

2 consecutive EngA-type G domains span residues 4-169 and 179-355; these read PLVA…PEVA and IAVA…AAHR. Residues 10 to 17, 57 to 61, 120 to 123, 185 to 192, 232 to 236, and 297 to 300 contribute to the GTP site; these read GRPNVGKS, DTGGL, NKCE, DTAGI, and NKWD. The KH-like domain maps to 356–441; sequence KRIATSVVNE…PIRFRWRSKS (86 aa).

This sequence belongs to the TRAFAC class TrmE-Era-EngA-EngB-Septin-like GTPase superfamily. EngA (Der) GTPase family. As to quaternary structure, associates with the 50S ribosomal subunit.

Functionally, GTPase that plays an essential role in the late steps of ribosome biogenesis. The protein is GTPase Der of Synechococcus sp. (strain JA-3-3Ab) (Cyanobacteria bacterium Yellowstone A-Prime).